Here is a 1173-residue protein sequence, read N- to C-terminus: DNA-directed RNA polymerase subunit beta (1173 aa).

Residues 1-23 are disordered; sequence MEGSLLVASSTSNNETANTASTD. A compositionally biased stretch (low complexity) spans 8–22; it reads ASSTSNNETANTAST.

Belongs to the RNA polymerase beta chain family. In terms of assembly, the RNAP catalytic core consists of 2 alpha, 1 beta, 1 beta' and 1 omega subunit. When a sigma factor is associated with the core the holoenzyme is formed, which can initiate transcription.

It carries out the reaction RNA(n) + a ribonucleoside 5'-triphosphate = RNA(n+1) + diphosphate. Functionally, DNA-dependent RNA polymerase catalyzes the transcription of DNA into RNA using the four ribonucleoside triphosphates as substrates. In Paenarthrobacter aurescens (strain TC1), this protein is DNA-directed RNA polymerase subunit beta.